The following is a 504-amino-acid chain: Malonyl-CoA decarboxylase, mitochondrial (504 aa).

The N-terminal 50 residues, 1-50, are a transit peptide targeting the mitochondrion; the sequence is MRGLRRGLSRLGPRLGPWAVPRSLRRVLRAAGPWRGQSSAGSVSERGGAS. The segment at 51-201 is alpha-helical domain; sequence MEEVLSRSVP…VLKNMLSEWF (151 aa). The segment at 202–504 is catalytic domain; sequence STGFLNLERV…VSQFQQNSKL (303 aa). The active-site Proton acceptor is Ser340. Catalysis depends on His434, which acts as the Proton donor. The Microbody targeting signal motif lies at 502–504; it reads SKL.

It is found in the mitochondrion. Its subcellular location is the cytoplasm. It localises to the peroxisome. It carries out the reaction malonyl-CoA + H(+) = acetyl-CoA + CO2. Its pathway is metabolic intermediate biosynthesis; acetyl-CoA biosynthesis; acetyl-CoA from malonyl-CoA: step 1/1. Its function is as follows. Catalyzes the conversion of malonyl-CoA to acetyl-CoA. In the fatty acid biosynthesis MCD selectively removes malonyl-CoA and thus assures that methyl-malonyl-CoA is the only chain elongating substrate for fatty acid synthase and that fatty acids with multiple methyl side chains are produced. The protein is Malonyl-CoA decarboxylase, mitochondrial (MLYCD) of Anser anser anser (Western greylag goose).